A 306-amino-acid chain; its full sequence is Heme A synthase (306 aa).

At 1-5 the chain is on the cytoplasmic side; sequence MKALR. The chain crosses the membrane as a helical span at residues 6–26; sequence AVSLANTAVMLLAVLWGAWVT. Residues 27 to 56 lie on the Extracellular side of the membrane; it reads SSDSGDGCGASWPLCKGTFMPDWDYAAIVE. A disulfide bond links Cys34 and Cys41. Glu56 is a catalytic residue. Residues 57 to 77 form a helical membrane-spanning segment; that stretch reads FGHRVVSALAGLLSVAVLVWV. Position 59 (His59) interacts with heme o. At 78–89 the chain is on the cytoplasmic side; that stretch reads ARVRPSETRLKR. Residues 90-110 form a helical membrane-spanning segment; that stretch reads LAFGTFFFVVLQGGLGAAAVL. The Extracellular segment spans residues 111–116; that stretch reads RPQPDL. Residues 117–137 traverse the membrane as a helical segment; that stretch reads VMALHFGFSLLCFTFALLVTV. His121 is a binding site for heme o. Residues 138-164 are Cytoplasmic-facing; sequence ALGQGERAAFQRPDVSAQPVAPGLRTQ. Residues 165–185 traverse the membrane as a helical segment; sequence IWGLAVYTYLVVYLGAYVRHL. Topologically, residues 186-206 are extracellular; that stretch reads GASMACTGWPLCNGELIPPLY. A disulfide bond links Cys191 and Cys197. The helical transmembrane segment at 207 to 227 threads the bilayer; sequence GPVGANFAHRLGAALAVVLVL. Position 215 (His215) interacts with heme b. Over 228-247 the chain is Cytoplasmic; that stretch reads RLWWTARRLTERDDLRRGAA. The helical transmembrane segment at 248–268 threads the bilayer; that stretch reads WALALMAAQVASGALFPLGYL. Over 269–277 the chain is Extracellular; that stretch reads NLLTQLLHT. Residue His276 participates in heme b binding. A helical transmembrane segment spans residues 278–298; sequence GLITGFWGVLSYLCYLTLPVG. Topologically, residues 299-306 are cytoplasmic; the sequence is RETVAVSA.

Belongs to the COX15/CtaA family. Type 1 subfamily. As to quaternary structure, interacts with CtaB. Heme b is required as a cofactor.

It localises to the cell membrane. It catalyses the reaction Fe(II)-heme o + 2 A + H2O = Fe(II)-heme a + 2 AH2. The protein operates within porphyrin-containing compound metabolism; heme A biosynthesis; heme A from heme O: step 1/1. Catalyzes the conversion of heme O to heme A by two successive hydroxylations of the methyl group at C8. The first hydroxylation forms heme I, the second hydroxylation results in an unstable dihydroxymethyl group, which spontaneously dehydrates, resulting in the formyl group of heme A. This is Heme A synthase from Symbiobacterium thermophilum (strain DSM 24528 / JCM 14929 / IAM 14863 / T).